The chain runs to 505 residues: Ribose import ATP-binding protein RbsA 1 (505 aa).

ABC transporter domains lie at 13-249 and 254-503; these read LALR…VGRD and YPKQ…TGRA. 45 to 52 lines the ATP pocket; it reads GENGAGKS.

Belongs to the ABC transporter superfamily. Ribose importer (TC 3.A.1.2.1) family. As to quaternary structure, the complex is composed of an ATP-binding protein (RbsA), two transmembrane proteins (RbsC) and a solute-binding protein (RbsB).

It is found in the cell membrane. It catalyses the reaction D-ribose(out) + ATP + H2O = D-ribose(in) + ADP + phosphate + H(+). In terms of biological role, part of the ABC transporter complex RbsABC involved in ribose import. Responsible for energy coupling to the transport system. This Streptomyces coelicolor (strain ATCC BAA-471 / A3(2) / M145) protein is Ribose import ATP-binding protein RbsA 1.